We begin with the raw amino-acid sequence, 148 residues long: Snaclec B1 (148 aa).

The first 24 residues, 1–24 (MGRIIFVSFGLLVVFLSLSGTGAA), serve as a signal peptide directing secretion. Intrachain disulfides connect Cys-27-Cys-38, Cys-55-Cys-144, and Cys-121-Cys-136. Residues 34 to 145 (YDQHCYKVFD…CRLLGHFVCK (112 aa)) form the C-type lectin domain.

Belongs to the snaclec family. Heterodimer; disulfide-linked. As to expression, expressed by the venom gland.

The protein resides in the secreted. Its function is as follows. Interferes with one step of hemostasis (modulation of platelet aggregation, or coagulation cascade, for example). In Macrovipera lebetinus (Levantine viper), this protein is Snaclec B1.